The following is a 431-amino-acid chain: Enolase (431 aa).

Q163 serves as a coordination point for (2R)-2-phosphoglycerate. Residue E205 is the Proton donor of the active site. The Mg(2+) site is built by D242, E288, and D315. (2R)-2-phosphoglycerate-binding residues include K340, R369, S370, and K391. K340 functions as the Proton acceptor in the catalytic mechanism.

This sequence belongs to the enolase family. Mg(2+) serves as cofactor.

It is found in the cytoplasm. It localises to the secreted. The protein localises to the cell surface. The enzyme catalyses (2R)-2-phosphoglycerate = phosphoenolpyruvate + H2O. Its pathway is carbohydrate degradation; glycolysis; pyruvate from D-glyceraldehyde 3-phosphate: step 4/5. Catalyzes the reversible conversion of 2-phosphoglycerate (2-PG) into phosphoenolpyruvate (PEP). It is essential for the degradation of carbohydrates via glycolysis. This Bacillus cereus (strain AH187) protein is Enolase.